The following is a 1363-amino-acid chain: Spike glycoprotein (1363 aa).

The N-terminal stretch at 1-13 (MFLILLISLPTAF) is a signal peptide. Residues 14 to 1307 (AVIGDLKCTT…GTYEYYVKWP (1294 aa)) lie on the Extracellular side of the membrane. The BetaCoV S1-NTD domain occupies 15–298 (VIGDLKCTTV…DFMSEIKCKT (284 aa)). 5 cysteine pairs are disulfide-bonded: Cys21/Cys165, Cys160/Cys193, Cys172/Cys252, Cys286/Cys296, and Cys331/Cys356. N-linked (GlcNAc...) asparagine; by host glycans are attached at residues Asn59 and Asn133. N-linked (GlcNAc...) asparagine; by host glycosylation is present at Asn198. The region spanning 329-617 (PDCNIEAWLN…DVNSGTTCST (289 aa)) is the BetaCoV S1-CTD domain. Asn359 is a glycosylation site (N-linked (GlcNAc...) asparagine; by host). Disulfide bonds link Cys374–Cys427 and Cys386–Cys615. Residues Asn437, Asn649, Asn676, Asn696, Asn714, Asn739, and Asn788 are each glycosylated (N-linked (GlcNAc...) asparagine; by host). Fusion peptide regions lie at residues 914-935 (SAIEDLLFSKVKLSDVGFVEAY) and 933-953 (EAYNNCTGGAEIRDLICVQSY). N-linked (GlcNAc...) asparagine; by host glycosylation occurs at Asn937. A disulfide bridge connects residues Cys938 and Cys949. The interval 1014-1064 (QKLIANAFNNALGAIQEGFDATNSALVKIQAVVNANAEALNNLLQQLSNRF) is heptad repeat 1. The stretch at 1043–1087 (QAVVNANAEALNNLLQQLSNRFGAISSSLQEILSRLDALEAQAQI) forms a coiled coil. N-linked (GlcNAc...) asparagine; by host glycans are attached at residues Asn1194, Asn1224, Asn1234, Asn1253, Asn1267, and Asn1288. The tract at residues 1258–1296 (APDLSLDYINVTFLDLQDEMNRLQEAIKVLNQSYINLKD) is heptad repeat 2. The stretch at 1269–1297 (TFLDLQDEMNRLQEAIKVLNQSYINLKDI) forms a coiled coil. Residues 1308–1328 (WYVWLLIGFAGVAMLVLLFFI) traverse the membrane as a helical segment. Topologically, residues 1329-1363 (CCCTGCGTSCFKKCGGCCDDYTGHQELVIKTSHDD) are cytoplasmic. Positions 1359-1363 (TSHDD) match the KxHxx motif.

It belongs to the betacoronaviruses spike protein family. As to quaternary structure, homotrimer; each monomer consists of a S1 and a S2 subunit. The resulting peplomers protrude from the virus surface as spikes. Specific enzymatic cleavages in vivo yield mature proteins. The precursor is processed into S1 and S2 by host cell furin or another cellular protease to yield the mature S1 and S2 proteins. Additionally, a second cleavage leads to the release of a fusion peptide after viral attachment to host cell receptor. In terms of processing, the cytoplasmic Cys-rich domain is palmitoylated. Spike glycoprotein is digested within host endosomes.

The protein localises to the virion membrane. The protein resides in the host endoplasmic reticulum-Golgi intermediate compartment membrane. It is found in the host cell membrane. Functionally, attaches the virion to the cell membrane by interacting with host receptor, initiating the infection. Its function is as follows. Mediates fusion of the virion and cellular membranes by acting as a class I viral fusion protein. Under the current model, the protein has at least three conformational states: pre-fusion native state, pre-hairpin intermediate state, and post-fusion hairpin state. During viral and target cell membrane fusion, the coiled coil regions (heptad repeats) assume a trimer-of-hairpins structure, positioning the fusion peptide in close proximity to the C-terminal region of the ectodomain. The formation of this structure appears to drive apposition and subsequent fusion of viral and target cell membranes. Acts as a viral fusion peptide which is unmasked following S2 cleavage occurring upon virus endocytosis. The polypeptide is Spike glycoprotein (Bovine coronavirus (strain LSU-94LSS-051) (BCoV-LSU)).